Here is a 120-residue protein sequence, read N- to C-terminus: Peptidyl-tRNA hydrolase (120 aa).

The protein belongs to the PTH2 family.

It is found in the cytoplasm. The catalysed reaction is an N-acyl-L-alpha-aminoacyl-tRNA + H2O = an N-acyl-L-amino acid + a tRNA + H(+). In terms of biological role, the natural substrate for this enzyme may be peptidyl-tRNAs which drop off the ribosome during protein synthesis. The polypeptide is Peptidyl-tRNA hydrolase (Saccharolobus islandicus (strain Y.N.15.51 / Yellowstone #2) (Sulfolobus islandicus)).